We begin with the raw amino-acid sequence, 52 residues long: Rubredoxin-2 (52 aa).

One can recognise a Rubredoxin-like domain in the interval 1–52 (MEQWKCNICGYIYNPETGDPEGDIPAGTSFESLPDSWMCPVCGAGKEEFTKI). Fe cation-binding residues include C6, C9, C39, and C42.

This sequence belongs to the rubredoxin family. Monomer. Requires Fe(3+) as cofactor.

Serves as an electron acceptor for pyruvate ferredoxin oxidoreductase (PFOR). This Chlorobaculum tepidum (strain ATCC 49652 / DSM 12025 / NBRC 103806 / TLS) (Chlorobium tepidum) protein is Rubredoxin-2 (rub2).